Reading from the N-terminus, the 340-residue chain is Cytochrome c oxidase subunit 1 (340 aa).

Residues 18–38 (MCYLLVAILCGFLGYIYSLFI) form a helical membrane-spanning segment. Glutamate 41 and glycine 46 together coordinate Ca(2+). A helical transmembrane segment spans residues 42-62 (LSIIGCGVLFGDYQYYNVLVT). Histidine 64 contributes to the Fe(II)-heme a binding site. The next 7 membrane-spanning stretches (helical) occupy residues 66–86 (LVMV…NYFV), 100–120 (LNNM…SGLL), 148–168 (FTVF…INLL), 186–206 (LFIW…PVLA), 237–257 (LFWF…FGLI), 279–299 (MILI…VVGM), and 305–325 (AYFG…LFNW). Histidine 243 contacts Cu cation. Positions 243–247 (HPEVY) form a cross-link, 1'-histidyl-3'-tyrosine (His-Tyr). Position 247 (tyrosine 247) interacts with O2. Residues histidine 292 and histidine 293 each contribute to the Cu cation site.

It belongs to the heme-copper respiratory oxidase family. As to quaternary structure, component of the cytochrome c oxidase (complex IV, CIV), a multisubunit enzyme composed of a catalytic core of 3 subunits and several supernumerary subunits. The complex exists as a monomer or a dimer and forms supercomplexes (SCs) in the inner mitochondrial membrane with ubiquinol-cytochrome c oxidoreductase (cytochrome b-c1 complex, complex III, CIII). Heme serves as cofactor. The cofactor is Cu cation.

It localises to the mitochondrion inner membrane. It catalyses the reaction 4 Fe(II)-[cytochrome c] + O2 + 8 H(+)(in) = 4 Fe(III)-[cytochrome c] + 2 H2O + 4 H(+)(out). It participates in energy metabolism; oxidative phosphorylation. Its function is as follows. Component of the cytochrome c oxidase, the last enzyme in the mitochondrial electron transport chain which drives oxidative phosphorylation. The respiratory chain contains 3 multisubunit complexes succinate dehydrogenase (complex II, CII), ubiquinol-cytochrome c oxidoreductase (cytochrome b-c1 complex, complex III, CIII) and cytochrome c oxidase (complex IV, CIV), that cooperate to transfer electrons derived from NADH and succinate to molecular oxygen, creating an electrochemical gradient over the inner membrane that drives transmembrane transport and the ATP synthase. Cytochrome c oxidase is the component of the respiratory chain that catalyzes the reduction of oxygen to water. Electrons originating from reduced cytochrome c in the intermembrane space (IMS) are transferred via the dinuclear copper A center (CU(A)) of subunit 2 and heme A of subunit 1 to the active site in subunit 1, a binuclear center (BNC) formed by heme A3 and copper B (CU(B)). The BNC reduces molecular oxygen to 2 water molecules using 4 electrons from cytochrome c in the IMS and 4 protons from the mitochondrial matrix. The chain is Cytochrome c oxidase subunit 1 (COI) from Strigomonas oncopelti (Parasitic flagellate).